A 66-amino-acid chain; its full sequence is Toxin Boma6e (66 aa).

In terms of domain architecture, LCN-type CS-alpha/beta spans 2 to 64; sequence RDAYIAQNYN…VPLKVQGKCH (63 aa). Disulfide bonds link Cys-12–Cys-63, Cys-22–Cys-46, and Cys-26–Cys-48.

Belongs to the long (3 C-C) scorpion toxin superfamily. In terms of processing, only three disulfide bridges can be formed, because only seven cysteines are present. In terms of tissue distribution, expressed by the venom gland.

The protein resides in the secreted. Its function is as follows. Binds voltage-independently at site-3 of sodium channels (Nav) and inhibits the inactivation of the activated channels, thereby blocking neuronal transmission. In Buthus occitanus mardochei (Moroccan scorpion), this protein is Toxin Boma6e.